An 881-amino-acid chain; its full sequence is Valine--tRNA ligase (881 aa).

The short motif at 48-58 (PNITGKLHLGH) is the 'HIGH' region element. A 'KMSKS' region motif is present at residues 527–531 (KMSKS). Lysine 530 serves as a coordination point for ATP. Coiled-coil stretches lie at residues 721-747 (KNET…AEMN) and 811-881 (LLDL…AALK).

It belongs to the class-I aminoacyl-tRNA synthetase family. ValS type 1 subfamily. Monomer.

Its subcellular location is the cytoplasm. The catalysed reaction is tRNA(Val) + L-valine + ATP = L-valyl-tRNA(Val) + AMP + diphosphate. Its function is as follows. Catalyzes the attachment of valine to tRNA(Val). As ValRS can inadvertently accommodate and process structurally similar amino acids such as threonine, to avoid such errors, it has a 'posttransfer' editing activity that hydrolyzes mischarged Thr-tRNA(Val) in a tRNA-dependent manner. The sequence is that of Valine--tRNA ligase from Clostridium acetobutylicum (strain ATCC 824 / DSM 792 / JCM 1419 / IAM 19013 / LMG 5710 / NBRC 13948 / NRRL B-527 / VKM B-1787 / 2291 / W).